The following is a 98-amino-acid chain: Protein S100-A13 (98 aa).

Residues 18–53 enclose the EF-hand domain; it reads TTFFTFARQEGRKDSLSVNEFKELVTQQLPHLLKDV. Positions 32, 37, 64, 66, 68, 70, and 75 each coordinate Ca(2+). Phosphoserine is present on S32.

The protein belongs to the S-100 family. Homodimer. Part of a copper-dependent multiprotein complex containing S100A13, FGF1 and SYT1. Interacts with FGF1 and SYT1. Interacts with IL1A. As to expression, expressed in heart and skeletal muscle.

It is found in the cytoplasm. It localises to the secreted. Functionally, plays a role in the export of proteins that lack a signal peptide and are secreted by an alternative pathway. Binds two calcium ions per subunit. Binds one copper ion. Binding of one copper ion does not interfere with calcium binding. Required for the copper-dependent stress-induced export of IL1A and FGF1. The calcium-free protein binds to lipid vesicles containing phosphatidylserine, but not to vesicles containing phosphatidylcholine. This Homo sapiens (Human) protein is Protein S100-A13 (S100A13).